Consider the following 264-residue polypeptide: Thymidylate synthase (264 aa).

DUMP is bound at residue arginine 21. Residue histidine 51 coordinates (6R)-5,10-methylene-5,6,7,8-tetrahydrofolate. Position 126 to 127 (126 to 127) interacts with dUMP; that stretch reads RR. Cysteine 146 (nucleophile) is an active-site residue. Residues 166-169, asparagine 177, and 207-209 each bind dUMP; these read RSCD and HLY. Aspartate 169 contributes to the (6R)-5,10-methylene-5,6,7,8-tetrahydrofolate binding site. Alanine 263 contributes to the (6R)-5,10-methylene-5,6,7,8-tetrahydrofolate binding site.

The protein belongs to the thymidylate synthase family. Bacterial-type ThyA subfamily. Homodimer.

The protein resides in the cytoplasm. It carries out the reaction dUMP + (6R)-5,10-methylene-5,6,7,8-tetrahydrofolate = 7,8-dihydrofolate + dTMP. It functions in the pathway pyrimidine metabolism; dTTP biosynthesis. In terms of biological role, catalyzes the reductive methylation of 2'-deoxyuridine-5'-monophosphate (dUMP) to 2'-deoxythymidine-5'-monophosphate (dTMP) while utilizing 5,10-methylenetetrahydrofolate (mTHF) as the methyl donor and reductant in the reaction, yielding dihydrofolate (DHF) as a by-product. This enzymatic reaction provides an intracellular de novo source of dTMP, an essential precursor for DNA biosynthesis. The sequence is that of Thymidylate synthase from Serratia proteamaculans (strain 568).